A 149-amino-acid polypeptide reads, in one-letter code: Ribonuclease pancreatic (149 aa).

The N-terminal stretch at 1-25 (MGLEKSFILFPLLILVLGWVQSSLG) is a signal peptide. The substrate site is built by K32 and R35. The active-site Proton acceptor is H37. Cystine bridges form between C51/C109, C65/C120, C83/C135, and C90/C97. A glycan (N-linked (GlcNAc...) asparagine) is linked at N59. 66–70 (KPVNT) lines the substrate pocket. Residue N87 is glycosylated (N-linked (GlcNAc...) asparagine). Substrate contacts are provided by K91 and R110. H144 functions as the Proton donor in the catalytic mechanism.

Belongs to the pancreatic ribonuclease family. Monomer. Interacts with and forms tight 1:1 complexes with RNH1. Dimerization of two such complexes may occur. Interaction with RNH1 inhibits this protein. In terms of tissue distribution, pancreas.

Its subcellular location is the secreted. The catalysed reaction is an [RNA] containing cytidine + H2O = an [RNA]-3'-cytidine-3'-phosphate + a 5'-hydroxy-ribonucleotide-3'-[RNA].. It catalyses the reaction an [RNA] containing uridine + H2O = an [RNA]-3'-uridine-3'-phosphate + a 5'-hydroxy-ribonucleotide-3'-[RNA].. Functionally, endonuclease that catalyzes the cleavage of RNA on the 3' side of pyrimidine nucleotides. Acts on single-stranded and double-stranded RNA. The polypeptide is Ribonuclease pancreatic (RNASE1) (Abrothrix jelskii (Jelski's altiplano mouse)).